The chain runs to 359 residues: MIGQPQSPEYKLSPEETDALFRSLLHKEGTWVEWGVGCQQLQQSGHSAQEIFEQTGFQTAQQNMIIVAAQVYQSIASSGVPEDLLAYCRGPRSDVLYELRILSHSQRAIAAQVCQAKSLEFDGAKELARAMQEFARLPQIPDSFTEHPGDAVAYQAWRSAKQKKDLQDRTRLIAKGLKFAHSATARQKIEQLLSDLTTSPTKAAPLLPLYRYDEDTNVPLLIPVAGSLPLESDRLLSVPPLKQASPFNLVTVATATSLVPLPSWQNVLTAGDPVVIFHQTDQLPQPIPGKPEPVLILLDRQQTTWNDNSYFAVDADGKVELGWFAEAPIAKILGQVLLVMRPKKILDENNLREPWQMDD.

Residues 12–195 (LSPEETDALF…RQKIEQLLSD (184 aa)) are N-terminal alpha-helix. The segment at 219–345 (PLLIPVAGSL…VLLVMRPKKI (127 aa)) is C-terminal beta-sheet.

Belongs to the RAF family. As to quaternary structure, homodimer. Forms an RbcL(8)-Raf1(8) complex. Forms complexes of many stoichiometries with RbcL with and without RbcS. RbcX and Raf1 can bind simultaneously to RbcL.

It localises to the cytoplasm. Functionally, a major RuBisCO chaperone. Acts after GroEL-GroES chaperonin to fold and/or assemble the large subunit of RuBisCO (ccbL, rbcL). Cooperates with RbcX in RbcL folding, plays the major role in assembly of dimers into RbcL(8)-Raf1(8) intermediate complexes. RbcS replaces Raf1, leading to holoenzyme formation. Raf1 and RbcX are probably functionally redundant; it has been suggested they may cooperate. The polypeptide is RuBisCO accumulation factor 1 (Picosynechococcus sp. (strain ATCC 27264 / PCC 7002 / PR-6) (Agmenellum quadruplicatum)).